A 183-amino-acid polypeptide reads, in one-letter code: RFKKIRRLGALPGFTSKRPRSGSDLKNQLRSGKKSQYRIRLEEKQKLRFHYGLTERQLLKYVHIAGKAKGSTGQILLQLLEMRLDNILFRLGMASTIPGARQLVNHRHILVNDRIVDIPSYRCKPRDIITTKNKQRSKALIQNYIASSPHHEELPNHLTIDPFQYKGLVNQIIDNKWIGLKIN.

The S4 RNA-binding domain occupies 82–143 (MRLDNILFRL…KQRSKALIQN (62 aa)).

This sequence belongs to the universal ribosomal protein uS4 family. Part of the 30S ribosomal subunit. Contacts protein S5. The interaction surface between S4 and S5 is involved in control of translational fidelity.

Its subcellular location is the plastid. The protein resides in the chloroplast. One of the primary rRNA binding proteins, it binds directly to 16S rRNA where it nucleates assembly of the body of the 30S subunit. Functionally, with S5 and S12 plays an important role in translational accuracy. This chain is Small ribosomal subunit protein uS4c (rps4), found in Aristea capitata.